Consider the following 167-residue polypeptide: NAD(P)H-quinone oxidoreductase subunit I, chloroplastic (167 aa).

4Fe-4S ferredoxin-type domains follow at residues 55–84 (GRIH…VDWI) and 95–124 (KNYS…MTEE). 8 residues coordinate [4Fe-4S] cluster: C64, C67, C70, C74, C104, C107, C110, and C114.

Belongs to the complex I 23 kDa subunit family. As to quaternary structure, NDH is composed of at least 16 different subunits, 5 of which are encoded in the nucleus. [4Fe-4S] cluster is required as a cofactor.

The protein resides in the plastid. It localises to the chloroplast thylakoid membrane. The enzyme catalyses a plastoquinone + NADH + (n+1) H(+)(in) = a plastoquinol + NAD(+) + n H(+)(out). It carries out the reaction a plastoquinone + NADPH + (n+1) H(+)(in) = a plastoquinol + NADP(+) + n H(+)(out). NDH shuttles electrons from NAD(P)H:plastoquinone, via FMN and iron-sulfur (Fe-S) centers, to quinones in the photosynthetic chain and possibly in a chloroplast respiratory chain. The immediate electron acceptor for the enzyme in this species is believed to be plastoquinone. Couples the redox reaction to proton translocation, and thus conserves the redox energy in a proton gradient. The sequence is that of NAD(P)H-quinone oxidoreductase subunit I, chloroplastic from Adiantum capillus-veneris (Maidenhair fern).